The primary structure comprises 117 residues: UPF0321 protein PJ695.01c (117 aa).

Residues 1 to 17 (MLLLLYICCLFLKFILA) form the signal peptide. Asparagine 39, asparagine 65, asparagine 71, and asparagine 104 each carry an N-linked (GlcNAc...) asparagine glycan.

The protein belongs to the UPF0321 family.

The polypeptide is UPF0321 protein PJ695.01c (Schizosaccharomyces pombe (strain 972 / ATCC 24843) (Fission yeast)).